The chain runs to 178 residues: Ribosome maturation factor RimP (178 aa).

This sequence belongs to the RimP family.

Its subcellular location is the cytoplasm. Required for maturation of 30S ribosomal subunits. The polypeptide is Ribosome maturation factor RimP (Mycobacterium avium (strain 104)).